Here is a 451-residue protein sequence, read N- to C-terminus: tRNA-2-methylthio-N(6)-dimethylallyladenosine synthase (451 aa).

An MTTase N-terminal domain is found at 2–119 (QNLYIKTYGC…LPDLLDACLA (118 aa)). [4Fe-4S] cluster contacts are provided by Cys11, Cys48, Cys82, Cys157, Cys161, and Cys164. The region spanning 143–377 (GRDGATAFVT…RINGLAQGYA (235 aa)) is the Radical SAM core domain. In terms of domain architecture, TRAM spans 378 to 441 (QALVGTQQAV…PNSLRGRAAL (64 aa)).

The protein belongs to the methylthiotransferase family. MiaB subfamily. Monomer. The cofactor is [4Fe-4S] cluster.

It localises to the cytoplasm. It catalyses the reaction N(6)-dimethylallyladenosine(37) in tRNA + (sulfur carrier)-SH + AH2 + 2 S-adenosyl-L-methionine = 2-methylsulfanyl-N(6)-dimethylallyladenosine(37) in tRNA + (sulfur carrier)-H + 5'-deoxyadenosine + L-methionine + A + S-adenosyl-L-homocysteine + 2 H(+). Its function is as follows. Catalyzes the methylthiolation of N6-(dimethylallyl)adenosine (i(6)A), leading to the formation of 2-methylthio-N6-(dimethylallyl)adenosine (ms(2)i(6)A) at position 37 in tRNAs that read codons beginning with uridine. The polypeptide is tRNA-2-methylthio-N(6)-dimethylallyladenosine synthase (Acidithiobacillus ferrooxidans (strain ATCC 23270 / DSM 14882 / CIP 104768 / NCIMB 8455) (Ferrobacillus ferrooxidans (strain ATCC 23270))).